The chain runs to 398 residues: Gastric triacylglycerol lipase (398 aa).

The first 19 residues, methionine 1–glycine 19, serve as a signal peptide directing secretion. Asparagine 34 and asparagine 99 each carry an N-linked (GlcNAc...) asparagine glycan. Positions proline 78–tryptophan 377 constitute an AB hydrolase-1 domain. Residue serine 172 is the Nucleophile of the active site. Cysteine 246 and cysteine 255 form a disulfide bridge. 2 N-linked (GlcNAc...) asparagine glycosylation sites follow: asparagine 271 and asparagine 327. Residues aspartate 343 and histidine 372 each act as charge relay system in the active site.

Belongs to the AB hydrolase superfamily. Lipase family.

It localises to the secreted. It carries out the reaction a triacylglycerol + H2O = a diacylglycerol + a fatty acid + H(+). It catalyses the reaction 1,2,3-tri-(9Z-octadecenoyl)-glycerol + H2O = 1,2-di-(9Z-octadecenoyl)-sn-glycerol + (9Z)-octadecenoate + H(+). The enzyme catalyses 1,2,3-trioctanoylglycerol + H2O = 1,2-dioctanoyl-sn-glycerol + octanoate + H(+). Its function is as follows. Catalyzes the hydrolysis of triacylglycerols to yield free fatty acids, diacylglycerol, monoacylglycerol, and glycerol. Shows a preferential hydrolysis at the sn-3 position of triacylglycerol. The polypeptide is Gastric triacylglycerol lipase (LIPF) (Homo sapiens (Human)).